A 69-amino-acid polypeptide reads, in one-letter code: Large ribosomal subunit protein bL32c (69 aa).

It belongs to the bacterial ribosomal protein bL32 family.

It localises to the plastid. Its subcellular location is the chloroplast. In Pelargonium hortorum (Common geranium), this protein is Large ribosomal subunit protein bL32c.